Here is a 319-residue protein sequence, read N- to C-terminus: Fiber protein (319 aa).

Shaft repeat units follow at residues 44 to 73 (GVLS…TVDT) and 82 to 103 (IKVN…GNGL).

It belongs to the adenoviridae fiber family. Homotrimer. Interacts with host receptor CD46. Interacts (via N-terminal tail region) with pentons.

It is found in the virion. Its subcellular location is the host nucleus. Forms spikes that protrude from each vertex of the icosahedral capsid. Interacts with host receptor CD46 to provide virion initial attachment to target cell. Fiber proteins are shed during virus entry, when virus is still at the cell surface. Heparan sulfate might also play a role in virus binding. The sequence is that of Fiber protein from Homo sapiens (Human).